We begin with the raw amino-acid sequence, 89 residues long: MALTSEQKKSILAEYGLHETDTGSPEAQIAMLTNRINTLTEHLKFHKHDHHSRRGLLLLVGRRRGLLKYLADNNVDRYRDLIARLGLRR.

The protein belongs to the universal ribosomal protein uS15 family. As to quaternary structure, part of the 30S ribosomal subunit. Forms a bridge to the 50S subunit in the 70S ribosome, contacting the 23S rRNA.

Its function is as follows. One of the primary rRNA binding proteins, it binds directly to 16S rRNA where it helps nucleate assembly of the platform of the 30S subunit by binding and bridging several RNA helices of the 16S rRNA. Functionally, forms an intersubunit bridge (bridge B4) with the 23S rRNA of the 50S subunit in the ribosome. This chain is Small ribosomal subunit protein uS15, found in Corynebacterium efficiens (strain DSM 44549 / YS-314 / AJ 12310 / JCM 11189 / NBRC 100395).